The following is a 333-amino-acid chain: Probable G-protein coupled receptor 33 (333 aa).

Topologically, residues 1 to 30 (MDLINSTDYLINASTLVRNSTQFLAPASKM) are extracellular. N-linked (GlcNAc...) asparagine glycosylation is found at asparagine 5, asparagine 12, and asparagine 19. A helical membrane pass occupies residues 31-53 (IIALSLYISSIIGTITNGLYLWV). At 54 to 64 (LRFKMKQTVNT) the chain is on the cytoplasmic side. A helical transmembrane segment spans residues 65-86 (LLFFHLILSYFISTMILPFMAT). The Extracellular portion of the chain corresponds to 87–103 (SQLQDNHWNFGTALCKV). An intrachain disulfide couples cysteine 101 to cysteine 179. Residues 104 to 124 (FNGTLSLGMFTSVFFLSAIGL) traverse the membrane as a helical segment. The Cytoplasmic portion of the chain corresponds to 125 to 143 (DRYLLTLHPVWSQQHRTPR). Residues 144–165 (WASSIVLGVWISAAALSIPYLI) traverse the membrane as a helical segment. Residues 166–209 (FRQTHHDRKGKVTCQNNYAVSTNWESKEMQALRQWIHVACFISR) lie on the Extracellular side of the membrane. A helical membrane pass occupies residues 210-230 (FLLGFLLPFFIIIFCYERVAS). At 231–246 (KVKERSLFKSSKPFKV) the chain is on the cytoplasmic side. Residues 247–268 (MMTAIISFFVCWMPYHIHQGLL) traverse the membrane as a helical segment. Residues 269-283 (LTTNQSLLLELTLIL) lie on the Extracellular side of the membrane. Residue asparagine 272 is glycosylated (N-linked (GlcNAc...) asparagine). A helical transmembrane segment spans residues 284 to 303 (TVLTTSFNTIFSPTLYLFVG). The Cytoplasmic segment spans residues 304-333 (ENFKKVFKKSILALFESTFSEDSSVERTQT).

Belongs to the G-protein coupled receptor 1 family.

The protein resides in the cell membrane. Functionally, orphan receptor; could be a chemoattractant receptor. This is Probable G-protein coupled receptor 33 (GPR33) from Pan troglodytes (Chimpanzee).